We begin with the raw amino-acid sequence, 266 residues long: Interleukin-33 (266 aa).

Positions 1–67 (MRPRMKYSNS…ETSYFRKEPT (67 aa)) are homeodomain-like HTH domain. A propeptide spanning residues 1-101 (MRPRMKYSNS…RSLLGSIQAF (101 aa)) is cleaved from the precursor. Positions 66–108 (PTKRYSLKSGTKHEENFSAYPRDSRKRSLLGSIQAFAASVDTL) are interaction with RELA.

This sequence belongs to the IL-1 family. Highly divergent. As to quaternary structure, (Microbial infection) Interacts (in reduced form) with H.polygyrus ARI; the interaction abolishes the interaction with its primary receptor IL1RL1. In terms of assembly, forms a 1:1:1 heterotrimeric complex with its primary high-affinity receptor IL1RL1 and the coreceptor IL1RAP. Interacts with cargo receptor TMED10; the interaction mediates the translocation from the cytoplasm into the ERGIC (endoplasmic reticulum-Golgi intermediate compartment) and thereby secretion. Post-translationally, the full-length protein can be released from cells and is able to signal via the IL1RL1/ST2 receptor. However, proteolytic processing by CELA1, CSTG/cathepsin G and ELANE/neutrophil elastase produces C-terminal peptides that are more active than the unprocessed full-length protein. May also be proteolytically processed by calpains. Proteolytic cleavage mediated by apoptotic caspases including CASP3 and CASP7 results in IL33 inactivation. In vitro proteolytic cleavage by CASP1 was reported but could not be confirmed in vivo suggesting that IL33 is probably not a direct substrate for that caspase.

The protein resides in the nucleus. It is found in the chromosome. The protein localises to the cytoplasm. Its subcellular location is the cytoplasmic vesicle. It localises to the secretory vesicle. The protein resides in the secreted. In terms of biological role, cytokine that binds to and signals through the IL1RL1/ST2 receptor which in turn activates NF-kappa-B and MAPK signaling pathways in target cells. Involved in the maturation of Th2 cells inducing the secretion of T-helper type 2-associated cytokines. Also involved in activation of mast cells, basophils, eosinophils and natural killer cells. Acts as an enhancer of polarization of alternatively activated macrophages. Acts as a chemoattractant for Th2 cells, and may function as an 'alarmin', that amplifies immune responses during tissue injury. Induces rapid UCP2-dependent mitochondrial rewiring that attenuates the generation of reactive oxygen species and preserves the integrity of Krebs cycle required for persistent production of itaconate and subsequent GATA3-dependent differentiation of inflammation-resolving alternatively activated macrophages. Its function is as follows. In quiescent endothelia the uncleaved form is constitutively and abundantly expressed, and acts as a chromatin-associated nuclear factor with transcriptional repressor properties, it may sequester nuclear NF-kappaB/RELA, lowering expression of its targets. This form is rapidely lost upon angiogenic or pro-inflammatory activation. The sequence is that of Interleukin-33 from Mus musculus (Mouse).